The chain runs to 875 residues: Probable dipeptidyl-aminopeptidase B (875 aa).

Residues 1–90 (MSEPKPIQDT…ASSETTPPRK (90 aa)) form a disordered region. Residues 1–98 (MSEPKPIQDT…RKGVDRKLKK (98 aa)) are Cytoplasmic-facing. Low complexity predominate over residues 19–28 (SSISSASTTS). Basic and acidic residues predominate over residues 33–46 (RLAEESEKNHDASS). Residues 99-119 (VLLIVGGFFVAAWIVSLVVFL) traverse the membrane as a helical; Signal-anchor for type II membrane protein segment. At 120-875 (TNKSYKHGSQ…VNDAKPKIES (756 aa)) the chain is on the vacuolar side. N-linked (GlcNAc...) asparagine glycosylation is found at asparagine 354 and asparagine 567. A disordered region spans residues 689 to 715 (VDFQSSDGGRRTTRSPRRATGRPSATS). A compositionally biased stretch (basic residues) spans 699-708 (RTTRSPRRAT). The active-site Charge relay system is serine 726. A glycan (N-linked (GlcNAc...) asparagine) is linked at asparagine 785. Catalysis depends on charge relay system residues aspartate 803 and histidine 836.

This sequence belongs to the peptidase S9B family.

The protein resides in the vacuole membrane. It carries out the reaction Release of an N-terminal dipeptide, Xaa-Yaa-|-Zaa-, from a polypeptide, preferentially when Yaa is Pro, provided Zaa is neither Pro nor hydroxyproline.. In terms of biological role, type IV dipeptidyl-peptidase which removes N-terminal dipeptides sequentially from polypeptides having unsubstituted N-termini provided that the penultimate residue is proline. The chain is Probable dipeptidyl-aminopeptidase B (DAPB) from Verticillium alfalfae (strain VaMs.102 / ATCC MYA-4576 / FGSC 10136) (Verticillium wilt of alfalfa).